The sequence spans 422 residues: UDP-N-acetylglucosamine 1-carboxyvinyltransferase (422 aa).

22-23 (KN) lines the phosphoenolpyruvate pocket. Arg94 lines the UDP-N-acetyl-alpha-D-glucosamine pocket. Cys118 serves as the catalytic Proton donor. Position 118 is a 2-(S-cysteinyl)pyruvic acid O-phosphothioketal (Cys118). UDP-N-acetyl-alpha-D-glucosamine contacts are provided by residues 123-127 (RPVDL), Asp309, and Ile331.

The protein belongs to the EPSP synthase family. MurA subfamily.

It is found in the cytoplasm. It catalyses the reaction phosphoenolpyruvate + UDP-N-acetyl-alpha-D-glucosamine = UDP-N-acetyl-3-O-(1-carboxyvinyl)-alpha-D-glucosamine + phosphate. It functions in the pathway cell wall biogenesis; peptidoglycan biosynthesis. Cell wall formation. Adds enolpyruvyl to UDP-N-acetylglucosamine. The protein is UDP-N-acetylglucosamine 1-carboxyvinyltransferase of Cereibacter sphaeroides (strain ATCC 17029 / ATH 2.4.9) (Rhodobacter sphaeroides).